A 324-amino-acid chain; its full sequence is Phospho-N-acetylmuramoyl-pentapeptide-transferase (324 aa).

10 consecutive transmembrane segments (helical) span residues 9-29, 53-73, 77-97, 117-137, 147-167, 176-196, 201-221, 227-247, 253-273, and 304-324; these read TFAVAFIITVIGVPLFIPFLV, TMGAVVFITAMLISFLVFSFI, VSAATWLLFIALALFGALGFL, FLGQVVISILFYLVYHFNDFA, IEVDLGWFFVIFILFWLVGFS, LDGLVSGLSVIAFSAFGVIAF, MDVAIFCFAIVGGMLGFLLFN, IFMGDTGSLALGGSIAAISIL, LLLLIGIIFVIETASVILQVF, and VLTFWGIGLVGAIISVCVVIF.

This sequence belongs to the glycosyltransferase 4 family. MraY subfamily. It depends on Mg(2+) as a cofactor.

It localises to the cell membrane. It carries out the reaction UDP-N-acetyl-alpha-D-muramoyl-L-alanyl-gamma-D-glutamyl-meso-2,6-diaminopimeloyl-D-alanyl-D-alanine + di-trans,octa-cis-undecaprenyl phosphate = di-trans,octa-cis-undecaprenyl diphospho-N-acetyl-alpha-D-muramoyl-L-alanyl-D-glutamyl-meso-2,6-diaminopimeloyl-D-alanyl-D-alanine + UMP. Its pathway is cell wall biogenesis; peptidoglycan biosynthesis. Catalyzes the initial step of the lipid cycle reactions in the biosynthesis of the cell wall peptidoglycan: transfers peptidoglycan precursor phospho-MurNAc-pentapeptide from UDP-MurNAc-pentapeptide onto the lipid carrier undecaprenyl phosphate, yielding undecaprenyl-pyrophosphoryl-MurNAc-pentapeptide, known as lipid I. This Listeria monocytogenes serovar 1/2a (strain ATCC BAA-679 / EGD-e) protein is Phospho-N-acetylmuramoyl-pentapeptide-transferase.